Here is a 261-residue protein sequence, read N- to C-terminus: Proliferating cell nuclear antigen (261 aa).

3 positions are modified to N6-acetyllysine: Lys14, Lys77, and Lys80. Residues 61–80 (RCDRNLAMGVNLTSMSKILK) mediate DNA binding. A disulfide bridge links Cys135 with Cys162. Lys164 participates in a covalent cross-link: Glycyl lysine isopeptide (Lys-Gly) (interchain with G-Cter in SUMO2); alternate. A Glycyl lysine isopeptide (Lys-Gly) (interchain with G-Cter in ubiquitin); alternate cross-link involves residue Lys164. Residue Tyr211 is modified to Phosphotyrosine; by EGFR. N6-acetyllysine is present on Lys248. A Glycyl lysine isopeptide (Lys-Gly) (interchain with G-Cter in SUMO2) cross-link involves residue Lys254.

It belongs to the PCNA family. Homotrimer. Interacts with p300/EP300; the interaction occurs on chromatin in UV-irradiated damaged cells. Interacts with CREBBP (via transactivation domain and C-terminus); the interaction occurs on chromatin in UV-irradiated damaged cells. Directly interacts with POLD1, POLD3 and POLD4 subunits of the DNA polymerase delta complex, POLD3 being the major interacting partner; the interaction with POLD3 is inhibited by CDKN1A/p21(CIP1). Forms a complex with activator 1 heteropentamer in the presence of ATP. Interacts with EXO1, POLH, POLK, DNMT1, ERCC5, FEN1, CDC6 and POLDIP2. Interacts with POLB. Interacts with APEX2; this interaction is triggered by reactive oxygen species and increased by misincorporation of uracil in nuclear DNA. Forms a ternary complex with DNTTIP2 and core histone. Interacts with KCTD10 and PPP1R15A. Interacts with SMARCA5/SNF2H. Interacts with BAZ1B/WSTF; the interaction is direct and is required for BAZ1B/WSTF binding to replication foci during S phase. Interacts with HLTF and SHPRH. Interacts with NUDT15; this interaction is disrupted in response to UV irradiation and acetylation. Interacts with CDKN1A/p21(CIP1) and CDT1; interacts via their PIP-box which also recruits the DCX(DTL) complex. The interaction with CDKN1A inhibits POLD3 binding. Interacts with DDX11. Interacts with EGFR; positively regulates PCNA. Interacts with PARPBP. Interacts (when ubiquitinated) with SPRTN; leading to enhance RAD18-mediated PCNA ubiquitination. Interacts (when polyubiquitinated) with ZRANB3. Interacts with SMARCAD1. Interacts with CDKN1C. Interacts with PCLAF (via PIP-box). Interacts with RTEL1 (via PIP-box); the interaction is direct and essential for the suppression of telomere fragility. Interacts with FAM111A (via PIP-box); the interaction is direct and required for PCNA loading on chromatin binding. Interacts with LIG1. Interacts with SETMAR. Interacts with ANKRD17. Interacts with FBXO18/FBH1 (via PIP-box); the interaction recruits the DCX(DTL) complex and promotes ubiquitination and degradation of FBXO18/FBH1. Interacts with POLN. Interacts with SDE2 (via PIP-box); the interaction is direct and prevents ultraviolet light induced monoubiquitination. Component of the replisome complex composed of at least DONSON, MCM2, MCM7, PCNA and TICRR; interaction at least with PCNA occurs during DNA replication. Interacts with MAPK15; the interaction is chromatin binding dependent and prevents MDM2-mediated PCNA destruction by inhibiting the association of PCNA with MDM2. Interacts with PARP10 (via PIP-box). Interacts with DDI2. Interacts with HMCES (via PIP-box). Interacts with TRAIP (via PIP-box). Interacts with UHRF2. Interacts with ALKBH2; this interaction is enhanced during the S-phase of the cell cycle. Interacts with ATAD5; the interaction promotes USP1-mediated PCNA deubiquitination. Interacts (when phosphorylated) with GRB2. Interacts with ANG. Interacts with nuclear UNG; this interaction mediates UNG recruitment to S-phase replication foci. Interacts with ERCC6L2 (via an atypical PIP-box); this interaction facilitates cenrtomeric localization of ERCC6L2. In terms of processing, phosphorylated. Phosphorylation at Tyr-211 by EGFR stabilizes chromatin-associated PCNA. Post-translationally, acetylated by CREBBP and p300/EP300; preferentially acetylated by CREBBP on Lys-80, Lys-13 and Lys-14 and on Lys-77 by p300/EP300 upon loading on chromatin in response to UV irradiation. Lysine acetylation disrupts association with chromatin, hence promoting PCNA ubiquitination and proteasomal degradation in response to UV damage in a CREBBP- and EP300-dependent manner. Acetylation disrupts interaction with NUDT15 and promotes degradation. Ubiquitinated. Following DNA damage, can be either monoubiquitinated to stimulate direct bypass of DNA lesions by specialized DNA polymerases or polyubiquitinated to promote recombination-dependent DNA synthesis across DNA lesions by template switching mechanisms. Following induction of replication stress, monoubiquitinated by the UBE2B-RAD18 complex on Lys-164, leading to recruit translesion (TLS) polymerases, which are able to synthesize across DNA lesions in a potentially error-prone manner. An error-free pathway also exists and requires non-canonical polyubiquitination on Lys-164 through 'Lys-63' linkage of ubiquitin moieties by the E2 complex UBE2N-UBE2V2 and the E3 ligases, HLTF, RNF8 and SHPRH. This error-free pathway, also known as template switching, employs recombination mechanisms to synthesize across the lesion, using as a template the undamaged, newly synthesized strand of the sister chromatid. Monoubiquitination at Lys-164 also takes place in undamaged proliferating cells, and is mediated by the DCX(DTL) complex, leading to enhance PCNA-dependent translesion DNA synthesis. Sumoylated during S phase. In terms of processing, methylated on glutamate residues by ARMT1.

The protein resides in the nucleus. Functionally, auxiliary protein of DNA polymerase delta and epsilon, is involved in the control of eukaryotic DNA replication by increasing the polymerase's processibility during elongation of the leading strand. Induces a robust stimulatory effect on the 3'-5' exonuclease and 3'-phosphodiesterase, but not apurinic-apyrimidinic (AP) endonuclease, APEX2 activities. Has to be loaded onto DNA in order to be able to stimulate APEX2. Plays a key role in DNA damage response (DDR) by being conveniently positioned at the replication fork to coordinate DNA replication with DNA repair and DNA damage tolerance pathways. Acts as a loading platform to recruit DDR proteins that allow completion of DNA replication after DNA damage and promote postreplication repair: Monoubiquitinated PCNA leads to recruitment of translesion (TLS) polymerases, while 'Lys-63'-linked polyubiquitination of PCNA is involved in error-free pathway and employs recombination mechanisms to synthesize across the lesion. The polypeptide is Proliferating cell nuclear antigen (PCNA) (Cricetulus griseus (Chinese hamster)).